The following is a 418-amino-acid chain: Actin-like protein C08B11.6 (418 aa).

This sequence belongs to the actin family. ARP6 subfamily.

The protein localises to the cytoplasm. The protein resides in the cytoskeleton. This chain is Actin-like protein C08B11.6 (arp-6), found in Caenorhabditis elegans.